Consider the following 431-residue polypeptide: Glutamyl-tRNA(Gln) amidotransferase subunit A (431 aa).

Catalysis depends on charge relay system residues K37 and S112. S136 (acyl-ester intermediate) is an active-site residue.

This sequence belongs to the amidase family. GatA subfamily. In terms of assembly, heterotrimer of A, B and C subunits.

The enzyme catalyses L-glutamyl-tRNA(Gln) + L-glutamine + ATP + H2O = L-glutaminyl-tRNA(Gln) + L-glutamate + ADP + phosphate + H(+). Allows the formation of correctly charged Gln-tRNA(Gln) through the transamidation of misacylated Glu-tRNA(Gln) in organisms which lack glutaminyl-tRNA synthetase. The reaction takes place in the presence of glutamine and ATP through an activated gamma-phospho-Glu-tRNA(Gln). The protein is Glutamyl-tRNA(Gln) amidotransferase subunit A of Methanospirillum hungatei JF-1 (strain ATCC 27890 / DSM 864 / NBRC 100397 / JF-1).